A 367-amino-acid polypeptide reads, in one-letter code: Cytochrome-c peroxidase IdrP2 (367 aa).

The signal sequence occupies residues 1–28 (MTTHQSIRRLSRIAALVGLAFVAGTVAA). 2 consecutive Cytochrome c domains span residues 47–157 (DMVE…AMWQ) and 200–345 (SQQK…EALS). Heme c contacts are provided by cysteine 69, cysteine 72, histidine 73, cysteine 215, cysteine 218, and histidine 219.

The iodate reductase (Idr) complex is composed of a molybdopterin-dependent iodate reductase (IdrA and IdrB subunits) and two associated peroxidases (IdrP1 and IdrP2). The cofactor is heme c.

The protein localises to the periplasm. The catalysed reaction is 2 Fe(II)-[cytochrome c] + H2O2 + 2 H(+) = 2 Fe(III)-[cytochrome c] + 2 H2O. In terms of biological role, involved in iodate respiration. May play a critical role in detoxification of inadvertent H(2)O(2) generated by the iodate reductase IdrA/IdrB. In Denitromonas iodatirespirans, this protein is Cytochrome-c peroxidase IdrP2.